Here is a 511-residue protein sequence, read N- to C-terminus: Arginine-containing cyclodipeptide synthase eshA (511 aa).

Positions 413–417 match the Conserved DDXXE motif motif; that stretch reads DDSAE.

This sequence belongs to the arginine-containing cyclodipeptide synthase family.

It catalyses the reaction L-arginyl-tRNA(Arg) + L-leucyl-tRNA(Leu) = cyclo(L-arginyl-L-leucyl) + tRNA(Arg) + tRNA(Leu) + 2 H(+). It participates in secondary metabolite biosynthesis. Its function is as follows. Arginine-containing cyclodipeptide synthase; part of the cluster that mediates the biosynthesis of a highly modified cyclo-arginine-leucine dipeptide (cRW). Within the pathway, eshA acts as the scaffold-generating enzyme and is responsible for formation of the cyclo-Arg-Leu diketopiperazine (cRL) from L-arginyl-tRNA(Arg) + L-Leucyl-tRNA(Leu). Additional enzymes from the cluster then further modify the cyclo-Arg-Leu diketopiperazine (cRW) scaffold. This Penicillium shearii (Eupenicillium shearii) protein is Arginine-containing cyclodipeptide synthase eshA.